Reading from the N-terminus, the 261-residue chain is 4-hydroxy-tetrahydrodipicolinate reductase (261 aa).

NAD(+) is bound at residue 9–14 (GCLGRM). Arginine 36 is an NADP(+) binding site. NAD(+)-binding positions include 97–99 (GTT) and 118–121 (SANM). Catalysis depends on histidine 151, which acts as the Proton donor/acceptor. Residue histidine 152 participates in (S)-2,3,4,5-tetrahydrodipicolinate binding. Catalysis depends on lysine 155, which acts as the Proton donor. 161–162 (GT) lines the (S)-2,3,4,5-tetrahydrodipicolinate pocket.

Belongs to the DapB family.

It is found in the cytoplasm. The enzyme catalyses (S)-2,3,4,5-tetrahydrodipicolinate + NAD(+) + H2O = (2S,4S)-4-hydroxy-2,3,4,5-tetrahydrodipicolinate + NADH + H(+). It catalyses the reaction (S)-2,3,4,5-tetrahydrodipicolinate + NADP(+) + H2O = (2S,4S)-4-hydroxy-2,3,4,5-tetrahydrodipicolinate + NADPH + H(+). The protein operates within amino-acid biosynthesis; L-lysine biosynthesis via DAP pathway; (S)-tetrahydrodipicolinate from L-aspartate: step 4/4. In terms of biological role, catalyzes the conversion of 4-hydroxy-tetrahydrodipicolinate (HTPA) to tetrahydrodipicolinate. In Wolbachia sp. subsp. Drosophila simulans (strain wRi), this protein is 4-hydroxy-tetrahydrodipicolinate reductase.